We begin with the raw amino-acid sequence, 449 residues long: Gamma-aminobutyric acid receptor subunit delta (449 aa).

The N-terminal stretch at methionine 1 to alanine 24 is a signal peptide. Residues methionine 25–isoleucine 251 are Extracellular-facing. 2 N-linked (GlcNAc...) asparagine glycosylation sites follow: asparagine 103 and asparagine 106. An intrachain disulfide couples cysteine 164 to cysteine 178. The chain crosses the membrane as a helical span at residues isoleucine 252–isoleucine 271. The Cytoplasmic segment spans residues serine 272–alanine 275. Residues valine 276 to arginine 298 form a helical membrane-spanning segment. Topologically, residues serine 299–lysine 308 are extracellular. The helical transmembrane segment at alanine 309–alanine 331 threads the bilayer. Residues histidine 332 to threonine 423 lie on the Cytoplasmic side of the membrane. A Phosphoserine modification is found at serine 390. A helical transmembrane segment spans residues isoleucine 424–alanine 446. The Extracellular portion of the chain corresponds to tyrosine 447 to methionine 449.

It belongs to the ligand-gated ion channel (TC 1.A.9) family. Gamma-aminobutyric acid receptor (TC 1.A.9.5) subfamily. GABRD sub-subfamily. As to quaternary structure, heteropentamer, formed by a combination of alpha (GABRA1-6), beta (GABRB1-3), gamma (GABRG1-3), delta (GABRD), epsilon (GABRE), rho (GABRR1-3), pi (GABRP) and theta (GABRQ) chains, each subunit exhibiting distinct physiological and pharmacological properties.

It localises to the cell membrane. The enzyme catalyses chloride(in) = chloride(out). In terms of biological role, delta subunit of the heteropentameric ligand-gated chloride channel gated by gamma-aminobutyric acid (GABA), a major inhibitory neurotransmitter in the brain. GABA-gated chloride channels, also named GABA(A) receptors (GABAAR), consist of five subunits arranged around a central pore and contain GABA active binding site(s) located at the alpha and beta subunit interface(s). When activated by GABA, GABAARs selectively allow the flow of chloride anions across the cell membrane down their electrochemical gradient. GABAARs containing delta/GABRD subunits are predominantly expressed and located in extrasynaptic or perisynaptic positions on hippocampus and cerebellar granule cells, and contribute to the tonic GABAergic inhibition. GABAAR containing alpha-4-beta-3-delta subunits can simultaneously bind GABA and histamine where histamine binds at the interface of two neighboring beta subunits, which may be involved in the regulation of sleep and wakefulness. This Mus musculus (Mouse) protein is Gamma-aminobutyric acid receptor subunit delta.